The primary structure comprises 473 residues: 3-isopropylmalate dehydratase large subunit (473 aa).

[4Fe-4S] cluster contacts are provided by cysteine 354, cysteine 414, and cysteine 417.

Belongs to the aconitase/IPM isomerase family. LeuC type 1 subfamily. In terms of assembly, heterodimer of LeuC and LeuD. [4Fe-4S] cluster is required as a cofactor.

It carries out the reaction (2R,3S)-3-isopropylmalate = (2S)-2-isopropylmalate. It participates in amino-acid biosynthesis; L-leucine biosynthesis; L-leucine from 3-methyl-2-oxobutanoate: step 2/4. Functionally, catalyzes the isomerization between 2-isopropylmalate and 3-isopropylmalate, via the formation of 2-isopropylmaleate. This Mycobacterium tuberculosis (strain CDC 1551 / Oshkosh) protein is 3-isopropylmalate dehydratase large subunit.